We begin with the raw amino-acid sequence, 49 residues long: Large ribosomal subunit protein bL33B (49 aa).

This sequence belongs to the bacterial ribosomal protein bL33 family.

This chain is Large ribosomal subunit protein bL33B, found in Latilactobacillus sakei subsp. sakei (strain 23K) (Lactobacillus sakei subsp. sakei).